We begin with the raw amino-acid sequence, 800 residues long: Protocadherin beta-10 (800 aa).

A signal peptide spans 1–26 (MAVRELCFPRQRQVLFLFLFWGVSLA). Residues 27–692 (GSGFGRYSVT…AEADLLTVYL (666 aa)) are Extracellular-facing. 5 Cadherin domains span residues 35–133 (VTEE…APVF), 138–242 (TVLK…APQF), 247–347 (YETQ…PPEL), 352–451 (FSNS…APAF), and 456–561 (YTLF…SPFV). N-linked (GlcNAc...) asparagine glycosylation is found at Asn-169 and Asn-181. N-linked (GlcNAc...) asparagine glycans are attached at residues Asn-418 and Asn-436. Residue Asn-567 is glycosylated (N-linked (GlcNAc...) asparagine). The region spanning 568–671 (GSAPCTELVP…LVDGFSQPYL (104 aa)) is the Cadherin 6 domain. Residues 693-713 (VVALASVSSLFLLSVLLFVAV) form a helical membrane-spanning segment. Residues 714-800 (RLCRRSRAAS…FRNSFGFNIQ (87 aa)) lie on the Cytoplasmic side of the membrane.

The protein resides in the cell membrane. Potential calcium-dependent cell-adhesion protein. May be involved in the establishment and maintenance of specific neuronal connections in the brain. The protein is Protocadherin beta-10 (PCDHB10) of Homo sapiens (Human).